The sequence spans 639 residues: Chaperone protein DnaK (639 aa).

Position 198 is a phosphothreonine; by autocatalysis (T198). The span at 603 to 618 (AKAQTQGGAQEGAAKQ) shows a compositional bias: low complexity. Positions 603-639 (AKAQTQGGAQEGAAKQSNATADDVVDAEFEEVKDDKK) are disordered. The segment covering 625–639 (DVVDAEFEEVKDDKK) has biased composition (acidic residues).

This sequence belongs to the heat shock protein 70 family.

Functionally, acts as a chaperone. The polypeptide is Chaperone protein DnaK (Shewanella sp. (strain MR-4)).